A 269-amino-acid polypeptide reads, in one-letter code: Formamidopyrimidine-DNA glycosylase (269 aa).

The active-site Schiff-base intermediate with DNA is Pro-2. Glu-3 functions as the Proton donor in the catalytic mechanism. Lys-57 (proton donor; for beta-elimination activity) is an active-site residue. DNA is bound by residues His-90, Arg-109, and Lys-150. The FPG-type zinc-finger motif lies at 235-269 (QVYGKAGEPCPECGEAIQEQKIGQRNTFYCSYCQC). The active-site Proton donor; for delta-elimination activity is Arg-259.

It belongs to the FPG family. As to quaternary structure, monomer. It depends on Zn(2+) as a cofactor.

The catalysed reaction is Hydrolysis of DNA containing ring-opened 7-methylguanine residues, releasing 2,6-diamino-4-hydroxy-5-(N-methyl)formamidopyrimidine.. The enzyme catalyses 2'-deoxyribonucleotide-(2'-deoxyribose 5'-phosphate)-2'-deoxyribonucleotide-DNA = a 3'-end 2'-deoxyribonucleotide-(2,3-dehydro-2,3-deoxyribose 5'-phosphate)-DNA + a 5'-end 5'-phospho-2'-deoxyribonucleoside-DNA + H(+). Involved in base excision repair of DNA damaged by oxidation or by mutagenic agents. Acts as a DNA glycosylase that recognizes and removes damaged bases. Has a preference for oxidized purines, such as 7,8-dihydro-8-oxoguanine (8-oxoG). Has AP (apurinic/apyrimidinic) lyase activity and introduces nicks in the DNA strand. Cleaves the DNA backbone by beta-delta elimination to generate a single-strand break at the site of the removed base with both 3'- and 5'-phosphates. The protein is Formamidopyrimidine-DNA glycosylase of Vibrio vulnificus (strain CMCP6).